The chain runs to 482 residues: Aspartyl/glutamyl-tRNA(Asn/Gln) amidotransferase subunit B (482 aa).

This sequence belongs to the GatB/GatE family. GatB subfamily. Heterotrimer of A, B and C subunits.

The catalysed reaction is L-glutamyl-tRNA(Gln) + L-glutamine + ATP + H2O = L-glutaminyl-tRNA(Gln) + L-glutamate + ADP + phosphate + H(+). It carries out the reaction L-aspartyl-tRNA(Asn) + L-glutamine + ATP + H2O = L-asparaginyl-tRNA(Asn) + L-glutamate + ADP + phosphate + 2 H(+). In terms of biological role, allows the formation of correctly charged Asn-tRNA(Asn) or Gln-tRNA(Gln) through the transamidation of misacylated Asp-tRNA(Asn) or Glu-tRNA(Gln) in organisms which lack either or both of asparaginyl-tRNA or glutaminyl-tRNA synthetases. The reaction takes place in the presence of glutamine and ATP through an activated phospho-Asp-tRNA(Asn) or phospho-Glu-tRNA(Gln). The protein is Aspartyl/glutamyl-tRNA(Asn/Gln) amidotransferase subunit B of Methanoregula boonei (strain DSM 21154 / JCM 14090 / 6A8).